The primary structure comprises 322 residues: CXXC-type zinc finger protein 5 (322 aa).

Gly residues predominate over residues 1–10 (MSSLGGGSQD). Residues 1–100 (MSSLGGGSQD…SGGGSMMGGE (100 aa)) form a disordered region. 2 stretches are compositionally biased toward low complexity: residues 11–20 (AGGSSSSSTN) and 28–52 (SGPK…VADD). At Thr53 the chain carries Phosphothreonine. Over residues 87–97 (SSGGSGGGSMM) the composition is skewed to gly residues. A CXXC-type zinc finger spans residues 256 to 297 (GKKKRKRCGMCAPCRRRINCEQCSSCRNRKTGHQICKFRKCE). The Nuclear localization signal motif lies at 257–262 (KKKRKR). Positions 263, 266, 269, 275, 278, 281, 291, and 296 each coordinate Zn(2+).

Interacts with DVL1. Interacts with RBPJ.

Its subcellular location is the nucleus. It localises to the cytoplasm. Functionally, may indirectly participate in activation of the NF-kappa-B and MAPK pathways. Acts as a mediator of BMP4-mediated modulation of canonical Wnt signaling activity in neural stem cells. Required for DNA damage-induced ATM phosphorylation, p53 activation and cell cycle arrest. Involved in myelopoiesis. Transcription factor. Binds to the oxygen responsive element of COX4I2 and represses its transcription under hypoxia conditions (4% oxygen), as well as normoxia conditions (20% oxygen). May repress COX4I2 transactivation induced by CHCHD2 and RBPJ. Binds preferentially to DNA containing cytidine-phosphate-guanosine (CpG) dinucleotides over CpH (H=A, T, and C), hemimethylated-CpG and hemimethylated-hydroxymethyl-CpG. This is CXXC-type zinc finger protein 5 (CXXC5) from Homo sapiens (Human).